The primary structure comprises 99 residues: Small ribosomal subunit protein uS14c (99 aa).

The protein belongs to the universal ribosomal protein uS14 family. Part of the 30S ribosomal subunit.

It localises to the plastid. It is found in the chloroplast. In terms of biological role, binds 16S rRNA, required for the assembly of 30S particles. The protein is Small ribosomal subunit protein uS14c of Welwitschia mirabilis (Tree tumbo).